Reading from the N-terminus, the 952-residue chain is Protein translocase subunit SecA (952 aa).

Residues Q135, 153–157 (GEGKT), and D575 contribute to the ATP site. Over residues 916-930 (VSAKAATQPAAPAAK) the composition is skewed to low complexity. Residues 916 to 952 (VSAKAATQPAAPAAKEVGRNDPCPCGSGKKYKKCCGK) are disordered. 4 residues coordinate Zn(2+): C938, C940, C949, and C950.

The protein belongs to the SecA family. In terms of assembly, monomer and homodimer. Part of the essential Sec protein translocation apparatus which comprises SecA, SecYEG and auxiliary proteins SecDF. Other proteins may also be involved. Zn(2+) is required as a cofactor.

The protein resides in the cell membrane. It localises to the cytoplasm. It carries out the reaction ATP + H2O + cellular proteinSide 1 = ADP + phosphate + cellular proteinSide 2.. Functionally, part of the Sec protein translocase complex. Interacts with the SecYEG preprotein conducting channel. Has a central role in coupling the hydrolysis of ATP to the transfer of proteins into and across the cell membrane, serving as an ATP-driven molecular motor driving the stepwise translocation of polypeptide chains across the membrane. The sequence is that of Protein translocase subunit SecA from Dehalococcoides mccartyi (strain ATCC BAA-2266 / KCTC 15142 / 195) (Dehalococcoides ethenogenes (strain 195)).